Reading from the N-terminus, the 439-residue chain is Arginine biosynthesis bifunctional protein ArgJ, mitochondrial (439 aa).

Substrate-binding residues include threonine 175, lysine 201, threonine 212, glutamate 301, asparagine 434, and serine 439. The active-site Nucleophile is the threonine 212.

Belongs to the ArgJ family. In terms of assembly, heterodimer of an alpha and a beta chain. The alpha and beta chains are autoproteolytically processed from a single precursor protein within the mitochondrion.

It is found in the mitochondrion matrix. The enzyme catalyses N(2)-acetyl-L-ornithine + L-glutamate = N-acetyl-L-glutamate + L-ornithine. It carries out the reaction L-glutamate + acetyl-CoA = N-acetyl-L-glutamate + CoA + H(+). It participates in amino-acid biosynthesis; L-arginine biosynthesis; L-ornithine and N-acetyl-L-glutamate from L-glutamate and N(2)-acetyl-L-ornithine (cyclic): step 1/1. Its pathway is amino-acid biosynthesis; L-arginine biosynthesis; N(2)-acetyl-L-ornithine from L-glutamate: step 1/4. Its function is as follows. Catalyzes two activities which are involved in the cyclic version of arginine biosynthesis: the synthesis of acetylglutamate from glutamate and acetyl-CoA, and of ornithine by transacetylation between acetylornithine and glutamate. This is Arginine biosynthesis bifunctional protein ArgJ, mitochondrial from Candida albicans (strain WO-1) (Yeast).